The primary structure comprises 68 residues: ATP synthase F(0) complex subunit 8 (68 aa).

Residues 8–24 (VWPTTITPMLLTLFLIT) form a helical membrane-spanning segment. An N6-acetyllysine; alternate modification is found at K54. Position 54 is an N6-succinyllysine; alternate (K54). K57 carries the post-translational modification N6-acetyllysine.

This sequence belongs to the ATPase protein 8 family. Component of the ATP synthase complex composed at least of ATP5F1A/subunit alpha, ATP5F1B/subunit beta, ATP5MC1/subunit c (homooctomer), MT-ATP6/subunit a, MT-ATP8/subunit 8, ATP5ME/subunit e, ATP5MF/subunit f, ATP5MG/subunit g, ATP5MK/subunit k, ATP5MJ/subunit j, ATP5F1C/subunit gamma, ATP5F1D/subunit delta, ATP5F1E/subunit epsilon, ATP5PF/subunit F6, ATP5PB/subunit b, ATP5PD/subunit d, ATP5PO/subunit OSCP. ATP synthase complex consists of a soluble F(1) head domain (subunits alpha(3) and beta(3)) - the catalytic core - and a membrane F(0) domain - the membrane proton channel (subunits c, a, 8, e, f, g, k and j). These two domains are linked by a central stalk (subunits gamma, delta, and epsilon) rotating inside the F1 region and a stationary peripheral stalk (subunits F6, b, d, and OSCP). Interacts with PRICKLE3.

It localises to the mitochondrion membrane. Subunit 8, of the mitochondrial membrane ATP synthase complex (F(1)F(0) ATP synthase or Complex V) that produces ATP from ADP in the presence of a proton gradient across the membrane which is generated by electron transport complexes of the respiratory chain. ATP synthase complex consist of a soluble F(1) head domain - the catalytic core - and a membrane F(1) domain - the membrane proton channel. These two domains are linked by a central stalk rotating inside the F(1) region and a stationary peripheral stalk. During catalysis, ATP synthesis in the catalytic domain of F(1) is coupled via a rotary mechanism of the central stalk subunits to proton translocation. In vivo, can only synthesize ATP although its ATP hydrolase activity can be activated artificially in vitro. Part of the complex F(0) domain. This chain is ATP synthase F(0) complex subunit 8, found in Pan paniscus (Pygmy chimpanzee).